Reading from the N-terminus, the 150-residue chain is Arginine repressor (150 aa).

It belongs to the ArgR family.

Its subcellular location is the cytoplasm. It functions in the pathway amino-acid biosynthesis; L-arginine biosynthesis [regulation]. Its function is as follows. Regulates arginine biosynthesis genes. The polypeptide is Arginine repressor (Halothermothrix orenii (strain H 168 / OCM 544 / DSM 9562)).